The chain runs to 30 residues: Cyclotide psyleio E (30 aa).

The segment at residues 1 to 30 (SVTPIVCGETCFGGTCNTPGCSCSWPICTK) is a cross-link (cyclopeptide (Ser-Lys)). Disulfide bonds link Cys-7–Cys-21, Cys-11–Cys-23, and Cys-16–Cys-28.

In terms of processing, this is a cyclic peptide.

Probably participates in a plant defense mechanism. This is Cyclotide psyleio E from Psychotria leiocarpa.